We begin with the raw amino-acid sequence, 82 residues long: Omega-conotoxin-like TxO6 (82 aa).

Residues 1-22 (MKLTCVVIVAVLFLTAWTLVMA) form the signal peptide. The propeptide occupies 23 to 50 (DDSNNGLANLFSKSRDEMEDPEAAKLEK). Cystine bridges form between C53-C71, C60-C76, and C70-C81.

The protein belongs to the conotoxin O1 superfamily. Expressed by the venom duct.

It localises to the secreted. Omega-conotoxins act at presynaptic membranes, they bind and block voltage-gated calcium channels (Cav). This is Omega-conotoxin-like TxO6 from Conus textile (Cloth-of-gold cone).